A 201-amino-acid polypeptide reads, in one-letter code: FMN-dependent NADH:quinone oxidoreductase (201 aa).

Residues S10, 16-18, 96-99, and 140-143 each bind FMN; these read SQS, MYNF, and SRGG.

Belongs to the azoreductase type 1 family. As to quaternary structure, homodimer. It depends on FMN as a cofactor.

It catalyses the reaction 2 a quinone + NADH + H(+) = 2 a 1,4-benzosemiquinone + NAD(+). The enzyme catalyses N,N-dimethyl-1,4-phenylenediamine + anthranilate + 2 NAD(+) = 2-(4-dimethylaminophenyl)diazenylbenzoate + 2 NADH + 2 H(+). In terms of biological role, quinone reductase that provides resistance to thiol-specific stress caused by electrophilic quinones. Functionally, also exhibits azoreductase activity. Catalyzes the reductive cleavage of the azo bond in aromatic azo compounds to the corresponding amines. The sequence is that of FMN-dependent NADH:quinone oxidoreductase from Cronobacter sakazakii (strain ATCC BAA-894) (Enterobacter sakazakii).